The following is a 303-amino-acid chain: 1-phosphofructokinase (303 aa).

248-249 (GD) is an ATP binding site. D249 functions as the Proton acceptor in the catalytic mechanism.

It belongs to the carbohydrate kinase PfkB family.

It catalyses the reaction beta-D-fructose 1-phosphate + ATP = beta-D-fructose 1,6-bisphosphate + ADP + H(+). Functionally, catalyzes the ATP-dependent phosphorylation of fructose-l-phosphate to fructose-l,6-bisphosphate. The chain is 1-phosphofructokinase (fruK) from Bacillus subtilis (strain 168).